The primary structure comprises 191 residues: Protein GrpE (191 aa).

It belongs to the GrpE family. In terms of assembly, homodimer.

It localises to the cytoplasm. In terms of biological role, participates actively in the response to hyperosmotic and heat shock by preventing the aggregation of stress-denatured proteins, in association with DnaK and GrpE. It is the nucleotide exchange factor for DnaK and may function as a thermosensor. Unfolded proteins bind initially to DnaJ; upon interaction with the DnaJ-bound protein, DnaK hydrolyzes its bound ATP, resulting in the formation of a stable complex. GrpE releases ADP from DnaK; ATP binding to DnaK triggers the release of the substrate protein, thus completing the reaction cycle. Several rounds of ATP-dependent interactions between DnaJ, DnaK and GrpE are required for fully efficient folding. This chain is Protein GrpE, found in Listeria monocytogenes serotype 4a (strain HCC23).